The primary structure comprises 739 residues: Probable beta-glucosidase L (739 aa).

Residues 1-17 (MQTLFLSLLAAAVTVHA) form the signal peptide. N-linked (GlcNAc...) asparagine glycans are attached at residues N40 and N224. Residue D252 is part of the active site. N398 carries N-linked (GlcNAc...) asparagine glycosylation.

The protein belongs to the glycosyl hydrolase 3 family.

Its subcellular location is the secreted. The catalysed reaction is Hydrolysis of terminal, non-reducing beta-D-glucosyl residues with release of beta-D-glucose.. It participates in glycan metabolism; cellulose degradation. Functionally, beta-glucosidases are one of a number of cellulolytic enzymes involved in the degradation of cellulosic biomass. Catalyzes the last step releasing glucose from the inhibitory cellobiose. This chain is Probable beta-glucosidase L (bglL), found in Aspergillus fumigatus (strain CBS 144.89 / FGSC A1163 / CEA10) (Neosartorya fumigata).